Reading from the N-terminus, the 184-residue chain is Der GTPase-activating protein YihI (184 aa).

Disordered stretches follow at residues 1 to 106 (MNRP…PTMS) and 159 to 184 (LGDDDEEEQQEDMLQLLKRNNPKDAL). The segment covering 8 to 32 (VADKAEKSKVKRKTREELEREARER) has biased composition (basic and acidic residues). Positions 159-169 (LGDDDEEEQQE) are enriched in acidic residues.

Belongs to the YihI family. In terms of assembly, interacts with Der.

Its function is as follows. A GTPase-activating protein (GAP) that modifies Der/EngA GTPase function. May play a role in ribosome biogenesis. This Pectobacterium atrosepticum (strain SCRI 1043 / ATCC BAA-672) (Erwinia carotovora subsp. atroseptica) protein is Der GTPase-activating protein YihI.